Here is a 60-residue protein sequence, read N- to C-terminus: Homeobox protein engrailed-like (60 aa).

Residues 1–41 constitute a DNA-binding region (homeobox); it reads GEQLCRLRAEFQASRYLTEERRTALARELRLNEAQIKIWFQ.

The protein belongs to the engrailed homeobox family.

The protein resides in the nucleus. The polypeptide is Homeobox protein engrailed-like (Lampetra planeri (Brook lamprey)).